A 1128-amino-acid chain; its full sequence is MATKTAQPSADNLGSRAPVEPCGYIYVYPKEGFPFKEASLLGNKNVGASAMSLPLLSDLTVESNFSFNVKAVHKKIDMTTLLVRVSAYHREAIVFFNTDLFEPIFVGPGLDILCSDARSLFGYTNFVPRTDLRDTVDIKDLYAPFYSEDSCFMAVVVTEGFKERLYFGNLVPIIAQGLKVQINGREAVKIPLYDEDLFSKSHEHLPRFYIPSVSKYLHDSVFTSIAQALRIRDVESVIRASEKQSIQDQYKLAKIVNSKDFSLQSVKCQDASAFMVIDCIAAELAMSYGLSFLEAPQDPCAVLDYTSWPIFETAETEEDRIKAIQDWNAMMSVHVYTHLFSTNSVLYLTKINKQTQSNKSEQNVYNTYFMQHGLAYAADATQRENGEPAFSGAPKFSGGTYTLYHLALASSFSPHLLARNCYYMQFCQHQKSTTNANYSVPQYVGTAAASDLCELCQGTCPASCIHTLFYRLKDRFPPVLGSQRRDPYVVTGVSGQYNDLDMLGNFATFREKEDEAVQNAESEKYTYWQLIQNVVEKLSTMGVTEGTVGSELITDIQSFLKTFRDIDNVVDSEVVKFMNCLVKNNINFRETIKTVHHVLHYCCNVFWQAPCAMFLNLFYKSVLAIIQDICLPIAMTYEQDNPSIGMMPSEWLKVHYQTIWTNFKSSCLDRGVLTGSEHKIVHTDMFCDFLNIDSALSGQIVPMKMQVRLAKALLTVPKTIKIKNRIVFSNSSMTETIQSGFIKSATKKDSYIVTGPYMKFLNSLHKVMFPNAKISALYLWHTFSQKKQLPVLPGISRENMVELANYVETSSKMHDDMNVLDIIPTTLLTYAKVRLNNTILRTCGQTQFYATTLQCLLPTLQTISATEYPHVLLDQSIMSVDHYLSSIKDKHALTVQTTLKEDIATVGKQRPIVTVPLVVNKYTGINGNTQIFQCGNLGYFMGRGVDRNLIPDSTGFRRQNNSSYMRRRHVFMTPMVAHLVKKNSNLNNLTFEVETIRKNVQNIFEDKDNLNIFDNVVLELVKGLGDSCENITEDDLQFYLGEYYIMSDEIWSRFQIITDSGAPWSVENVTKVLGCNKQEECKFEFVGVEEQLSCVPPQIEEFAPQATLSTLAASRKRKITSILSDIDL.

The segment at 453-466 (CELCQGTCPASCIH) is a zinc-finger region. Residues 1098–1128 (QIEEFAPQATLSTLAASRKRKITSILSDIDL) are required for nuclear localization.

This sequence belongs to the herpesviridae major DNA-binding protein family. In terms of assembly, homooligomers. Forms double-helical filaments necessary for the formation of replication compartments within the host nucleus. Interacts with the origin-binding protein. Interacts with the helicase primase complex; this interaction stimulates primer synthesis activity of the helicase-primase complex. Interacts with the DNA polymerase. Interacts with the alkaline exonuclease; this interaction increases its nuclease processivity.

The protein localises to the host nucleus. Functionally, single-stranded DNA-binding protein required for DNA replication. In terms of biological role, plays several crucial roles in viral infection. Participates in the opening of the viral DNA origin to initiate replication by interacting with the origin-binding protein. May disrupt loops, hairpins and other secondary structures present on ssDNA to reduce and eliminate pausing of viral DNA polymerase at specific sites during elongation. Promotes viral DNA recombination by performing strand-transfer, characterized by the ability to transfer a DNA strand from a linear duplex to a complementary single-stranded DNA circle. Can also catalyze the renaturation of complementary single strands. Additionally, reorganizes the host cell nucleus, leading to the formation of prereplicative sites and replication compartments. This process is driven by the protein which can form double-helical filaments in the absence of DNA. This Saimiri sciureus (Common squirrel monkey) protein is Major DNA-binding protein.